The primary structure comprises 557 residues: MSTEKQYQPQQPPPAYTGQGPDNGNAYGYPESYGKTETHSGDSCSGDTSMNPQQQGQQYQFRKDDEFYNLNHEGAGAPIGSYAEVFPTEDNNKPKFNDWPFIIVFLLTLCGFIVVASLTLRAWSQTYSSTGSGIYHDFDTGTLNTNSVILLVFSVVIAIFFAFIGIVLCRAYPKFFIYAGMIVNILAALGTAIMYMSLKYWSAGIVFLIFTFMTAWCYWGMRSRIPLTVAILRVIVLAMKNCPQSLFVSFFGTIVASAFAMLFSTVVVATYMKYDPSNTNSGCNVSGGDCSHAKLIGVLVVVFFCGYYISEVIRNVMHCTVSGVFGSWYYRYKSDQGMPKWPAMGAFKRAMTYSFGSICFGSLIVSIIETFRQLLQLGKQAAIASTDNANWIRIIFWLIDMLVGFIQWIAQYFNHYAYCIIALYGKPYLKAAKQTWYMFREKGIDALINDNLVNVALGFYSLFASYMSCLFAFLYLRFTKPGYNSDGDFNAPLMAFAFVIALQLTNIANETIRSGCATFFTALGHDPEVFQAQYPDRFDEIFRSYPQVLNKLTHQDV.

The segment at 1-58 is disordered; sequence MSTEKQYQPQQPPPAYTGQGPDNGNAYGYPESYGKTETHSGDSCSGDTSMNPQQQGQQ. Residues 1 to 99 lie on the Cytoplasmic side of the membrane; it reads MSTEKQYQPQ…DNNKPKFNDW (99 aa). The span at 41–58 shows a compositional bias: polar residues; sequence GDSCSGDTSMNPQQQGQQ. Residues 100–120 traverse the membrane as a helical segment; sequence PFIIVFLLTLCGFIVVASLTL. The Extracellular segment spans residues 121 to 147; it reads RAWSQTYSSTGSGIYHDFDTGTLNTNS. A helical transmembrane segment spans residues 148–168; that stretch reads VILLVFSVVIAIFFAFIGIVL. At 169-174 the chain is on the cytoplasmic side; the sequence is CRAYPK. A helical transmembrane segment spans residues 175 to 195; sequence FFIYAGMIVNILAALGTAIMY. The Extracellular portion of the chain corresponds to 196–200; it reads MSLKY. The helical transmembrane segment at 201–221 threads the bilayer; that stretch reads WSAGIVFLIFTFMTAWCYWGM. Over 222-246 the chain is Cytoplasmic; sequence RSRIPLTVAILRVIVLAMKNCPQSL. Residues 247–267 form a helical membrane-spanning segment; that stretch reads FVSFFGTIVASAFAMLFSTVV. Topologically, residues 268–292 are extracellular; it reads VATYMKYDPSNTNSGCNVSGGDCSH. Asparagine 284 carries an N-linked (GlcNAc...) asparagine glycan. Residues 293-313 form a helical membrane-spanning segment; it reads AKLIGVLVVVFFCGYYISEVI. At 314–350 the chain is on the cytoplasmic side; the sequence is RNVMHCTVSGVFGSWYYRYKSDQGMPKWPAMGAFKRA. Residues 351 to 371 traverse the membrane as a helical segment; it reads MTYSFGSICFGSLIVSIIETF. Topologically, residues 372-393 are extracellular; sequence RQLLQLGKQAAIASTDNANWIR. A helical membrane pass occupies residues 394-414; sequence IIFWLIDMLVGFIQWIAQYFN. The Cytoplasmic segment spans residues 415 to 454; the sequence is HYAYCIIALYGKPYLKAAKQTWYMFREKGIDALINDNLVN. A helical transmembrane segment spans residues 455–475; that stretch reads VALGFYSLFASYMSCLFAFLY. Topologically, residues 476–488 are extracellular; that stretch reads LRFTKPGYNSDGD. A helical membrane pass occupies residues 489–509; that stretch reads FNAPLMAFAFVIALQLTNIAN. At 510–557 the chain is on the cytoplasmic side; it reads ETIRSGCATFFTALGHDPEVFQAQYPDRFDEIFRSYPQVLNKLTHQDV.

Belongs to the CTL (choline transporter-like) family.

The protein resides in the cell membrane. In terms of biological role, probably involved in transport through the plasma membrane. The protein is Protein PNS1 (PNS1) of Candida glabrata (strain ATCC 2001 / BCRC 20586 / JCM 3761 / NBRC 0622 / NRRL Y-65 / CBS 138) (Yeast).